The following is a 353-amino-acid chain: Putative ABC transporter ATP-binding protein MG303 homolog (353 aa).

The ABC transporter domain occupies 72 to 312 (LYFYNLSVFV…MQLLQRYEIT (241 aa)). Position 107 to 114 (107 to 114 (GPSGSGKT)) interacts with ATP.

Belongs to the ABC transporter superfamily.

This is Putative ABC transporter ATP-binding protein MG303 homolog from Mycoplasma pneumoniae (strain ATCC 29342 / M129 / Subtype 1) (Mycoplasmoides pneumoniae).